Consider the following 456-residue polypeptide: Cysteine--tRNA ligase (456 aa).

Zn(2+) is bound at residue cysteine 28. Residues 30–40 carry the 'HIGH' region motif; sequence MTVYDYCHLGH. Cysteine 209, histidine 234, and glutamate 238 together coordinate Zn(2+). A 'KMSKS' region motif is present at residues 266–270; sequence KMSKS. Position 269 (lysine 269) interacts with ATP.

The protein belongs to the class-I aminoacyl-tRNA synthetase family. As to quaternary structure, monomer. It depends on Zn(2+) as a cofactor.

It localises to the cytoplasm. It carries out the reaction tRNA(Cys) + L-cysteine + ATP = L-cysteinyl-tRNA(Cys) + AMP + diphosphate. The chain is Cysteine--tRNA ligase from Dechloromonas aromatica (strain RCB).